We begin with the raw amino-acid sequence, 629 residues long: 1-deoxy-D-xylulose-5-phosphate synthase (629 aa).

Residues H78 and 119–121 (AHS) contribute to the thiamine diphosphate site. Mg(2+) is bound at residue D150. Thiamine diphosphate-binding positions include 151-152 (GA), N179, Y286, and E368. N179 serves as a coordination point for Mg(2+).

The protein belongs to the transketolase family. DXPS subfamily. Homodimer. Mg(2+) serves as cofactor. The cofactor is thiamine diphosphate.

It catalyses the reaction D-glyceraldehyde 3-phosphate + pyruvate + H(+) = 1-deoxy-D-xylulose 5-phosphate + CO2. Its pathway is metabolic intermediate biosynthesis; 1-deoxy-D-xylulose 5-phosphate biosynthesis; 1-deoxy-D-xylulose 5-phosphate from D-glyceraldehyde 3-phosphate and pyruvate: step 1/1. In terms of biological role, catalyzes the acyloin condensation reaction between C atoms 2 and 3 of pyruvate and glyceraldehyde 3-phosphate to yield 1-deoxy-D-xylulose-5-phosphate (DXP). The protein is 1-deoxy-D-xylulose-5-phosphate synthase of Acidovorax ebreus (strain TPSY) (Diaphorobacter sp. (strain TPSY)).